A 382-amino-acid polypeptide reads, in one-letter code: MGAFLDKPKMEKHNAQGQGNGLRYGLSSMQGWRVEMEDAHTAVIGLPSGLETWSFFAVYDGHAGSQVAKYCCEHLLDHITNNQDFKGSAGAPSVENVKNGIRTGFLEIDEHMRVMSEKKHGADRSGSTAVGVLISPQHTYFINCGDSRGLLCRNRKVYFFTQDHKPSNPLEKERIQNAGGSVMIQRVNGSLAVSRALGDFDYKCVHGKGPTEQLVSPEPEVHDIERSEEDDQFIILACDGIWDVMGNEELCDFVRSRLEVTDDLEKVCNEVVDTCLYKGSRDNMSVILICFPNAPKVSPEAVKKEEELDKYLESRVEEIIKKQGEGVPDLVHVMRTLASENIPSLPPGGELASKRNVIEAVYNRLNPYKNDDTDSTSTDDMW.

G2 carries the N-myristoyl glycine lipid modification. Residues 23 to 291 form the PPM-type phosphatase domain; it reads RYGLSSMQGW…DNMSVILICF (269 aa). The Mn(2+) site is built by D60, G61, D239, and D282. A phosphoserine mark is found at S375 and S377.

Belongs to the PP2C family. In terms of assembly, monomer. Interacts with SMAD2; the interaction dephosphorylates SMAD2 in its C-terminal SXS motif resulting in disruption of the SMAD2/SMAD4 complex, SMAD2 nuclear export and termination of the TGF-beta-mediated signaling. Interacts with SMAD2; the interaction dephosphorylates SMAD2 in its C-terminal SXS motif resulting in disruption of the SMAD2/SMAD4 complex, SMAD2 nuclear export and termination of the TGF-beta-mediated signaling. Interacts with the phosphorylated form of IKBKB/IKKB. Requires Mg(2+) as cofactor. Mn(2+) is required as a cofactor. In terms of processing, N-myristoylation is essential for the recognition of its substrates for dephosphorylation.

The protein resides in the nucleus. It localises to the cytoplasm. Its subcellular location is the cytosol. The protein localises to the membrane. The enzyme catalyses O-phospho-L-seryl-[protein] + H2O = L-seryl-[protein] + phosphate. The catalysed reaction is O-phospho-L-threonyl-[protein] + H2O = L-threonyl-[protein] + phosphate. Enzyme with a broad specificity. Negatively regulates TGF-beta signaling through dephosphorylating SMAD2 and SMAD3, resulting in their dissociation from SMAD4, nuclear export of the SMADs and termination of the TGF-beta-mediated signaling. Dephosphorylates PRKAA1 and PRKAA2. Plays an important role in the termination of TNF-alpha-mediated NF-kappa-B activation through dephosphorylating and inactivating IKBKB/IKKB. The sequence is that of Protein phosphatase 1A (PPM1A) from Bos taurus (Bovine).